The chain runs to 316 residues: Ornithine carbamoyltransferase (316 aa).

Carbamoyl phosphate-binding positions include 59 to 62, glutamine 86, arginine 110, and 137 to 140; these read STRT and HPCQ. Residues asparagine 168, aspartate 232, and 236–237 contribute to the L-ornithine site; that span reads SM. Residues 273–274 and arginine 301 each bind carbamoyl phosphate; that span reads CL.

This sequence belongs to the aspartate/ornithine carbamoyltransferase superfamily. OTCase family.

The protein localises to the cytoplasm. The enzyme catalyses carbamoyl phosphate + L-ornithine = L-citrulline + phosphate + H(+). Its pathway is amino-acid biosynthesis; L-arginine biosynthesis; L-arginine from L-ornithine and carbamoyl phosphate: step 1/3. Its function is as follows. Reversibly catalyzes the transfer of the carbamoyl group from carbamoyl phosphate (CP) to the N(epsilon) atom of ornithine (ORN) to produce L-citrulline. This chain is Ornithine carbamoyltransferase, found in Listeria innocua serovar 6a (strain ATCC BAA-680 / CLIP 11262).